We begin with the raw amino-acid sequence, 520 residues long: MEELQGYLEKDRSRQQHFLYPLLFQEYIYALAHNHGLNGSIFYEPVEVFGYDNKSSLVLVKRLITRIYQQNFLISLVNDSNQNRFVGYNHNNFFFSHFHSQMISESFAIIVEIPFSLRLVSYFEEKEIPKYHNLRSIHSIFPFLEDKLSHLNYVSDILIPHPIHMEILVQILQCWIQDVPFLHLLRFFLHEYHNLNSLLITQKKSIYVFSKENKRLFRFLYNSYVFEWEFLLVFIRKQFSYLRLTSYGTFLERTHFYEKIEHLQIKDFVVVCRNYFHRTLWFCKDPFMHYVRYQGKAILASKGTHLLMKKWKYHFFNFWQYYFHVWSQPYRIHINQLSNYSFYFLGYLSSLLLHFSAVRNQMLENSFLINTITKKFDTIVPVIFLIGSLAKAKFCTVSGHPISKPIWTDLSDSDILNRFGRICRNLSHYHSGSSKKQGLYRIKYILRLSCARTLARKHKSTVRTFLRRLGSGLLEEFFTEEEQVLSLIFPKTTPFFLHGSHRERIWYLDIIRINDLVNHS.

Belongs to the intron maturase 2 family. MatK subfamily.

The protein localises to the plastid. It is found in the chloroplast. In terms of biological role, usually encoded in the trnK tRNA gene intron. Probably assists in splicing its own and other chloroplast group II introns. This is Maturase K from Aspidistra elatior (Cast-iron plant).